Here is a 100-residue protein sequence, read N- to C-terminus: Elevenin-Vc1 (100 aa).

Positions Met1–Ala24 are cleaved as a signal peptide. Cysteines 29 and 38 form a disulfide. A propeptide spanning residues Lys44–Asp100 is cleaved from the precursor.

This sequence belongs to the elevenin family. Monomer. As to expression, expressed by the venom duct.

It localises to the secreted. In terms of biological role, may mimic the function of prey elevenin neuropeptide. In vivo, intracranial injection in mice induces hyperactivity (tested at 5 and 10 nM). This is Elevenin-Vc1 from Conus victoriae (Queen Victoria cone).